The sequence spans 160 residues: Conopressin/conophysin, isoform 2 (160 aa).

The N-terminal stretch at 1–30 is a signal peptide; that stretch reads MKCSVLQMSRLSWAMCLMLLMLLLLGTAQG. Cysteine 31 and cysteine 36 form a disulfide bridge. Glycine amide is present on glycine 39. Residues 40-47 constitute a propeptide that is removed on maturation; sequence GKRAVDAL. 7 disulfides stabilise this stretch: cysteine 53–cysteine 97, cysteine 56–cysteine 70, cysteine 64–cysteine 87, cysteine 71–cysteine 77, cysteine 104–cysteine 118, cysteine 112–cysteine 130, and cysteine 119–cysteine 124.

The protein belongs to the vasopressin/oxytocin family. As to expression, expressed by the venom gland.

It localises to the secreted. Its function is as follows. Targets vasopressin-oxytocin related receptors. The protein is Conopressin/conophysin, isoform 2 of Conus monile (Necklace cone).